Consider the following 200-residue polypeptide: MALKYPSGKEYRGNKPNAARRPAADYANRGMTLEDDLNATNEYYRERGIAVIHKKPTPVQIVRVDYPKRSAAVITEAYFRQASTTDYNGVYRGKYIDFEAKETKNKTAFPLKNFHAHQIRHMEQVVAHGGICFAILRFSLLNETYLLDASHLIAWWNKQEAGGRKSIPKQEIERHGHSIPLGYQPRIDYISVVDNVYFTR.

The tract at residues 1-27 (MALKYPSGKEYRGNKPNAARRPAADYA) is disordered. Thr-84, Asp-86, Glu-99, and Gln-118 together coordinate Mg(2+).

Belongs to the RecU family. Homodimer. Mg(2+) serves as cofactor.

The protein localises to the cytoplasm. It carries out the reaction Endonucleolytic cleavage at a junction such as a reciprocal single-stranded crossover between two homologous DNA duplexes (Holliday junction).. Endonuclease that resolves Holliday junction intermediates in genetic recombination. Cleaves mobile four-strand junctions by introducing symmetrical nicks in paired strands. Promotes annealing of linear ssDNA with homologous dsDNA. Required for DNA repair, homologous recombination and chromosome segregation. The polypeptide is Holliday junction resolvase RecU (Geobacillus kaustophilus (strain HTA426)).